The primary structure comprises 338 residues: Homeobox protein ceh-20 (338 aa).

One can recognise a PBC domain in the interval 4–187 (THPANLSELL…VMILRSRFLD (184 aa)). The PBC-A stretch occupies residues 11-91 (ELLDAVLKIN…EGVAGPDKGG (81 aa)). A PBC-B region spans residues 94–187 (GSDASGGDQA…VMILRSRFLD (94 aa)). The segment at residues 188–250 (ARRKRRNFSK…NKRIRYKKNM (63 aa)) is a DNA-binding region (homeobox; TALE-type).

Belongs to the TALE/PBX homeobox family. Interacts with Meis protein psa-3. Interacts with homeobox protein nob-1. As to expression, expressed in head dopaminergic neurons.

It localises to the nucleus. Functionally, transcription factor that binds to the 5'-TGATNNAT(G/T)(G/A)-3' PBC/Hox lineage enhancer region of sem-2 to promote cell fate specification in the postembryonic mesoderm (also known as the M lineage). Required for the M lineage-specific expression of the transcription factor, mls-2. Required for asymmetric division of the T hypodermal cell, probably acting via the regulation of asymmetric expression of Meis protein psa-3 in concert with homeobox protein nob-1 and the Wnt-MAPK pathway. Has a role in the mig-13 pathway to promote the guidance, migration and positioning of Q neuroblasts and their descendants along the anteroposterior body axis and the anterior migration of BDU interneurons. Also required for normal vulval formation. Plays a role in regulating gene expression in dopaminergic neurons, acting in midbody PDE neurons, and acting redundantly with ceh-40 in head neurons. May activate dopamine pathway genes in concert with ETS domain-containing protein ast-1, and homeobox proteins ceh-43 and ceh-40. The protein is Homeobox protein ceh-20 of Caenorhabditis elegans.